The primary structure comprises 180 residues: Large ribosomal subunit protein uL6 (180 aa).

Belongs to the universal ribosomal protein uL6 family. Part of the 50S ribosomal subunit.

Functionally, this protein binds to the 23S rRNA, and is important in its secondary structure. It is located near the subunit interface in the base of the L7/L12 stalk, and near the tRNA binding site of the peptidyltransferase center. The sequence is that of Large ribosomal subunit protein uL6 from Dictyoglomus turgidum (strain DSM 6724 / Z-1310).